We begin with the raw amino-acid sequence, 136 residues long: Small ribosomal subunit protein bS6 (136 aa).

The segment covering 97 to 128 (EKEQSAMLSRPDRDDFPGKDEERPRPSRRQYE) has biased composition (basic and acidic residues). The disordered stretch occupies residues 97–136 (EKEQSAMLSRPDRDDFPGKDEERPRPSRRQYEDVVEGGVE).

The protein belongs to the bacterial ribosomal protein bS6 family.

Binds together with bS18 to 16S ribosomal RNA. This is Small ribosomal subunit protein bS6 from Bartonella bacilliformis (strain ATCC 35685 / KC583 / Herrer 020/F12,63).